A 445-amino-acid chain; its full sequence is DDB1- and CUL4-associated factor 13 (445 aa).

Position 49 is an N6-acetyllysine (Lys49). 7 WD repeats span residues 64-104 (GHRD…CIRT), 107-146 (AHEG…YGDE), 149-191 (PLHT…PICS), 194-234 (WGFD…PLKK), 236-276 (ILDM…TPVM), 280-319 (DHVS…SREV), and 323-362 (KRMQ…KLGV). The segment at 353-441 (KANASEKLGV…LVSEKKKHVV (89 aa)) is required for nucleolar location.

Belongs to the WD repeat DCAF13/WDSOF1 family. Part of the small subunit (SSU) processome, composed of more than 70 proteins and the RNA chaperone small nucleolar RNA (snoRNA) U3. Component of the DCX(DCAF13) E3 ubiquitin ligase complex, at least composed of CUL4 (CUL4A or CUL4B), DDB1, DCAF13 and RBX1. Interacts (via WD40 domain) with DDB1. Interacts with ESR1 and LATS1. In terms of tissue distribution, expressed in the endometrium during decidualization. Expression is down-regulated in preeclampsia decidual tissues.

The protein resides in the nucleus. It localises to the nucleolus. It functions in the pathway protein modification; protein ubiquitination. Part of the small subunit (SSU) processome, first precursor of the small eukaryotic ribosomal subunit. During the assembly of the SSU processome in the nucleolus, many ribosome biogenesis factors, an RNA chaperone and ribosomal proteins associate with the nascent pre-rRNA and work in concert to generate RNA folding, modifications, rearrangements and cleavage as well as targeted degradation of pre-ribosomal RNA by the RNA exosome. Participates in the 18S rRNA processing in growing oocytes, being essential for oocyte nonsurrounded nucleolus (NSN) to surrounded nucleolus (SN) transition. In terms of biological role, substrate-recognition component of a DCX (DDB1-CUL4-X-box) E3 ubiquitin-protein ligase complex that plays a key role in embryo preimplantation and is required for normal meiotic cycle progression in oocytes. Acts as a maternal factor that regulates oocyte and zygotic chromatin tightness during maternal to zygotic transition. Also involved in the transformation of the endometrium into the decidua, known as decidualization, providing a solid foundation for implantation of blastocysts. Recognizes the histone methyltransferases SUV39H1 and SUV39H2 and directs them to polyubiquitination and proteasomal degradation, which facilitates the H3K9me3 removal and early zygotic gene expression, essential steps for progressive genome reprogramming and the establishment of pluripotency during preimplantation embryonic development. Supports the spindle assembly and chromosome condensation during oocyte meiotic division by targeting the polyubiquitination and degradation of PTEN, a lipid phosphatase that inhibits PI3K pathway as well as oocyte growth and maturation. Targets PMP22 for polyubiquitination and proteasomal degradation. This Homo sapiens (Human) protein is DDB1- and CUL4-associated factor 13.